A 530-amino-acid chain; its full sequence is Type 2 DNA topoisomerase 6 subunit B (530 aa).

ATP contacts are provided by residues N42, D76, 97–98 (SK), 106–113 (GMYGLGVK), and K427.

It belongs to the TOP6B family. As to quaternary structure, homodimer. Heterotetramer of two Top6A and two Top6B chains.

It carries out the reaction ATP-dependent breakage, passage and rejoining of double-stranded DNA.. Its function is as follows. Relaxes both positive and negative superturns and exhibits a strong decatenase activity. In Saccharolobus solfataricus (strain ATCC 35092 / DSM 1617 / JCM 11322 / P2) (Sulfolobus solfataricus), this protein is Type 2 DNA topoisomerase 6 subunit B.